Reading from the N-terminus, the 764-residue chain is Subtilisin-like protease SBT1.6 (764 aa).

The first 20 residues, 1–20, serve as a signal peptide directing secretion; the sequence is MASSTIVLLLFLSFPFISFA. Positions 46–99 constitute an Inhibitor I9 domain; the sequence is HWYSTEFAEESRIVHVYHTVFHGFSAVVTPDEADNLRNHPAVLAVFEDRRRELH. The region spanning 103–606 is the Peptidase S8 domain; sequence SPQFLGLQNQ…SGHLNLGRAM (504 aa). The active-site Charge relay system is the Asp131. Residue Asn191 is glycosylated (N-linked (GlcNAc...) asparagine). His205 functions as the Charge relay system in the catalytic mechanism. The 81-residue stretch at 377–457 folds into the PA domain; that stretch reads SSASLCMENT…NEGDRIKAYA (81 aa). Ser538 functions as the Charge relay system in the catalytic mechanism. Asn578 carries N-linked (GlcNAc...) asparagine glycosylation.

The protein belongs to the peptidase S8 family. As to expression, expressed in roots, leaves and flowers of mature plants.

The polypeptide is Subtilisin-like protease SBT1.6 (Arabidopsis thaliana (Mouse-ear cress)).